A 362-amino-acid polypeptide reads, in one-letter code: MAQVFNFSSGPAMLPAEVLKLAQQELCDWHGLGTSVMEISHRGKEFIQVAEEAEQDFRDLLNIPSNYKVLFCHGGGRGQFAGVPLNLLGDKTTADYVDAGYWAASAIKEAKKYCAPQIIDAKITVDGKRAVKPMREWQLSDNAAYLHYCPNETIDGIAIDETPDFGPEVVVTADFSSTILSAPLDVSRYGVIYAGAQKNIGPAGLTLVIVREDLLGKAHESCPSILDYTVLNDNDSMFNTPPTFAWYLSGLVFKWLKAQGGVAAMHKINQQKAELLYGVIDNSDFYRNDVAQANRSRMNVPFQLADNTLDKVFLEESFAAGLHALKGHRVVGGMRASIYNAMPIEGVKALTDFMIDFERRHG.

Positions 9 and 42 each coordinate L-glutamate. Pyridoxal 5'-phosphate is bound by residues Gly-76–Arg-77, Trp-102, Thr-153, Asp-174, and Gln-197. N6-(pyridoxal phosphate)lysine is present on Lys-198. Asn-239 to Thr-240 is a binding site for pyridoxal 5'-phosphate.

Belongs to the class-V pyridoxal-phosphate-dependent aminotransferase family. SerC subfamily. Homodimer. It depends on pyridoxal 5'-phosphate as a cofactor.

It is found in the cytoplasm. It carries out the reaction O-phospho-L-serine + 2-oxoglutarate = 3-phosphooxypyruvate + L-glutamate. The enzyme catalyses 4-(phosphooxy)-L-threonine + 2-oxoglutarate = (R)-3-hydroxy-2-oxo-4-phosphooxybutanoate + L-glutamate. Its pathway is amino-acid biosynthesis; L-serine biosynthesis; L-serine from 3-phospho-D-glycerate: step 2/3. The protein operates within cofactor biosynthesis; pyridoxine 5'-phosphate biosynthesis; pyridoxine 5'-phosphate from D-erythrose 4-phosphate: step 3/5. Functionally, catalyzes the reversible conversion of 3-phosphohydroxypyruvate to phosphoserine and of 3-hydroxy-2-oxo-4-phosphonooxybutanoate to phosphohydroxythreonine. This is Phosphoserine aminotransferase from Salmonella newport (strain SL254).